The chain runs to 242 residues: Biosynthetic peptidoglycan transglycosylase (242 aa).

A helical transmembrane segment spans residues 19-39; the sequence is LMVVLAVFWGGGIALFSVAPV.

The protein belongs to the glycosyltransferase 51 family.

The protein resides in the cell inner membrane. It catalyses the reaction [GlcNAc-(1-&gt;4)-Mur2Ac(oyl-L-Ala-gamma-D-Glu-L-Lys-D-Ala-D-Ala)](n)-di-trans,octa-cis-undecaprenyl diphosphate + beta-D-GlcNAc-(1-&gt;4)-Mur2Ac(oyl-L-Ala-gamma-D-Glu-L-Lys-D-Ala-D-Ala)-di-trans,octa-cis-undecaprenyl diphosphate = [GlcNAc-(1-&gt;4)-Mur2Ac(oyl-L-Ala-gamma-D-Glu-L-Lys-D-Ala-D-Ala)](n+1)-di-trans,octa-cis-undecaprenyl diphosphate + di-trans,octa-cis-undecaprenyl diphosphate + H(+). It functions in the pathway cell wall biogenesis; peptidoglycan biosynthesis. In terms of biological role, peptidoglycan polymerase that catalyzes glycan chain elongation from lipid-linked precursors. The sequence is that of Biosynthetic peptidoglycan transglycosylase from Escherichia coli O157:H7.